The primary structure comprises 156 residues: Biotin carboxyl carrier protein of acetyl-CoA carboxylase (156 aa).

A Biotinyl-binding domain is found at 73 to 156; sequence PAAAEISGHI…EFDEPLVVIE (84 aa). At Lys122 the chain carries N6-biotinyllysine.

As to quaternary structure, homodimer.

Its pathway is lipid metabolism; fatty acid biosynthesis. Its function is as follows. This protein is a component of the acetyl coenzyme A carboxylase complex; first, biotin carboxylase catalyzes the carboxylation of the carrier protein and then the transcarboxylase transfers the carboxyl group to form malonyl-CoA. The protein is Biotin carboxyl carrier protein of acetyl-CoA carboxylase (accB) of Escherichia coli O6:H1 (strain CFT073 / ATCC 700928 / UPEC).